The following is a 113-amino-acid chain: Large ribosomal subunit protein bL20c (113 aa).

It belongs to the bacterial ribosomal protein bL20 family.

The protein resides in the plastid. The protein localises to the chloroplast. Its function is as follows. Binds directly to 23S ribosomal RNA and is necessary for the in vitro assembly process of the 50S ribosomal subunit. It is not involved in the protein synthesizing functions of that subunit. This is Large ribosomal subunit protein bL20c from Nephroselmis olivacea (Green alga).